The chain runs to 103 residues: Co-chaperonin GroES (103 aa).

It belongs to the GroES chaperonin family. Heptamer of 7 subunits arranged in a ring. Interacts with the chaperonin GroEL.

It is found in the cytoplasm. Functionally, together with the chaperonin GroEL, plays an essential role in assisting protein folding. The GroEL-GroES system forms a nano-cage that allows encapsulation of the non-native substrate proteins and provides a physical environment optimized to promote and accelerate protein folding. GroES binds to the apical surface of the GroEL ring, thereby capping the opening of the GroEL channel. In Microcystis aeruginosa (strain NIES-843 / IAM M-2473), this protein is Co-chaperonin GroES.